Reading from the N-terminus, the 310-residue chain is Porphobilinogen deaminase (310 aa).

S-(dipyrrolylmethanemethyl)cysteine is present on cysteine 242.

The protein belongs to the HMBS family. In terms of assembly, monomer. Requires dipyrromethane as cofactor.

It carries out the reaction 4 porphobilinogen + H2O = hydroxymethylbilane + 4 NH4(+). It participates in porphyrin-containing compound metabolism; protoporphyrin-IX biosynthesis; coproporphyrinogen-III from 5-aminolevulinate: step 2/4. Its function is as follows. Tetrapolymerization of the monopyrrole PBG into the hydroxymethylbilane pre-uroporphyrinogen in several discrete steps. The polypeptide is Porphobilinogen deaminase (Shewanella sp. (strain W3-18-1)).